A 220-amino-acid polypeptide reads, in one-letter code: 14-3-3-like protein (220 aa).

Belongs to the 14-3-3 family.

The chain is 14-3-3-like protein from Spinacia oleracea (Spinach).